Reading from the N-terminus, the 449-residue chain is Chromosomal replication initiator protein DnaA (449 aa).

The segment at 1 to 73 (MDADLKNLWD…ANSIKAVCSK (73 aa)) is domain I, interacts with DnaA modulators. The domain II stretch occupies residues 73–110 (KLYTIEFIIMSEIYEKEEIKSSSNQKSKAIVVNDEMSS). Residues 111–327 (TLNPKYTFNS…GALIRIIAYS (217 aa)) form a domain III, AAA+ region region. 4 residues coordinate ATP: Gly-155, Gly-157, Lys-158, and Thr-159. The interval 328 to 449 (SLTNREVTVD…NDITKKLTQN (122 aa)) is domain IV, binds dsDNA.

Belongs to the DnaA family. Oligomerizes as a right-handed, spiral filament on DNA at oriC.

Its subcellular location is the cytoplasm. Its function is as follows. Plays an essential role in the initiation and regulation of chromosomal replication. ATP-DnaA binds to the origin of replication (oriC) to initiate formation of the DNA replication initiation complex once per cell cycle. Binds the DnaA box (a 9 base pair repeat at the origin) and separates the double-stranded (ds)DNA. Forms a right-handed helical filament on oriC DNA; dsDNA binds to the exterior of the filament while single-stranded (ss)DNA is stabiized in the filament's interior. The ATP-DnaA-oriC complex binds and stabilizes one strand of the AT-rich DNA unwinding element (DUE), permitting loading of DNA polymerase. After initiation quickly degrades to an ADP-DnaA complex that is not apt for DNA replication. Binds acidic phospholipids. The polypeptide is Chromosomal replication initiator protein DnaA (Clostridium beijerinckii (strain ATCC 51743 / NCIMB 8052) (Clostridium acetobutylicum)).